Reading from the N-terminus, the 143-residue chain is Endoribonuclease YbeY (143 aa).

Positions 109, 113, and 119 each coordinate Zn(2+).

This sequence belongs to the endoribonuclease YbeY family. Requires Zn(2+) as cofactor.

The protein resides in the cytoplasm. Its function is as follows. Single strand-specific metallo-endoribonuclease involved in late-stage 70S ribosome quality control and in maturation of the 3' terminus of the 16S rRNA. The protein is Endoribonuclease YbeY of Christiangramia forsetii (strain DSM 17595 / CGMCC 1.15422 / KT0803) (Gramella forsetii).